Reading from the N-terminus, the 273-residue chain is tRNA (guanine-N(7)-)-methyltransferase (273 aa).

Residues 1–31 (MSQHPDINTNVDATSLTDDQKSLDTNATSGN) show a composition bias toward polar residues. The tract at residues 1–36 (MSQHPDINTNVDATSLTDDQKSLDTNATSGNEVAPD) is disordered. Glu105, Glu130, Asp157, and Asp179 together coordinate S-adenosyl-L-methionine. Asp179 is an active-site residue. Substrate contacts are provided by residues Lys183, Asp215, and 252 to 255 (TKFE).

It belongs to the class I-like SAM-binding methyltransferase superfamily. TrmB family.

It carries out the reaction guanosine(46) in tRNA + S-adenosyl-L-methionine = N(7)-methylguanosine(46) in tRNA + S-adenosyl-L-homocysteine. It participates in tRNA modification; N(7)-methylguanine-tRNA biosynthesis. Its function is as follows. Catalyzes the formation of N(7)-methylguanine at position 46 (m7G46) in tRNA. The polypeptide is tRNA (guanine-N(7)-)-methyltransferase (Psychrobacter cryohalolentis (strain ATCC BAA-1226 / DSM 17306 / VKM B-2378 / K5)).